Reading from the N-terminus, the 678-residue chain is Oviduct-specific glycoprotein (678 aa).

A signal peptide spans 1 to 21 (MWKLLLWVGLVLVLKHHDGAA). The region spanning 22-385 (HKLVCYFTNW…YVLNDILVRA (364 aa)) is the GH18 domain. Residues C26 and C51 are joined by a disulfide bond. Residues 71-72 (LQ), 98-101 (GGWN), Y142, 211-214 (LSYD), and W355 each bind chitin. N402 and N441 each carry an N-linked (GlcNAc...) asparagine glycan. The interval 524 to 544 (LTPVGHQSVTPVSHQSVSPGG) is disordered. A compositionally biased stretch (polar residues) spans 528 to 544 (GHQSVTPVSHQSVSPGG). Residues N580, N596, and N648 are each glycosylated (N-linked (GlcNAc...) asparagine). Positions 581-606 (ISVTPEGQTMPLRGENLTSEVGTHPR) are disordered. Residues 651 to 662 (SVNSVTPQTSPL) are compositionally biased toward polar residues. The disordered stretch occupies residues 651-678 (SVNSVTPQTSPLSLKKEIPENSAVDEEA).

The protein belongs to the glycosyl hydrolase 18 family. In terms of tissue distribution, oviduct.

The protein localises to the cytoplasmic vesicle. It is found in the secretory vesicle. Functionally, binds to oocyte zona pellucida in vivo. May play a role in the fertilization process and/or early embryonic development. The sequence is that of Oviduct-specific glycoprotein (OVGP1) from Homo sapiens (Human).